The sequence spans 192 residues: Ion-translocating oxidoreductase complex subunit B (192 aa).

Positions Met-1–Ser-26 are hydrophobic. In terms of domain architecture, 4Fe-4S spans Glu-32–Val-91. The [4Fe-4S] cluster site is built by Cys-49, Cys-52, Cys-57, Cys-74, Cys-117, Cys-120, Cys-123, Cys-127, Cys-147, Cys-150, Cys-153, and Cys-157. 4Fe-4S ferredoxin-type domains lie at Met-108–Arg-137 and Ala-138–Val-167.

This sequence belongs to the 4Fe4S bacterial-type ferredoxin family. RnfB subfamily. The complex is composed of six subunits: RnfA, RnfB, RnfC, RnfD, RnfE and RnfG. The cofactor is [4Fe-4S] cluster.

It localises to the cell inner membrane. Functionally, part of a membrane-bound complex that couples electron transfer with translocation of ions across the membrane. In Citrobacter koseri (strain ATCC BAA-895 / CDC 4225-83 / SGSC4696), this protein is Ion-translocating oxidoreductase complex subunit B.